The sequence spans 418 residues: Calreticulin (418 aa).

Residues 1–17 (MLLPVPLLLGLLGLAAA) form the signal peptide. Residues 18–197 (EPVVYFKEQF…NSQVESGSLE (180 aa)) form an N-domain region. Q26 contacts Ca(2+). K48 is modified (N6-acetyllysine). Ca(2+)-binding residues include K62 and K64. An N6-(2-hydroxyisobutyryl)lysine modification is found at K64. Cysteines 105 and 137 form a disulfide. Y109, K111, Y128, and D135 together coordinate an alpha-D-glucoside. Residue K159 is modified to N6-acetyllysine. A 1-1 repeat occupies 191-202 (VESGSLEDDWDF). Residues 191–255 (VESGSLEDDW…DAKKPEDWDE (65 aa)) are 4 X approximate repeats. Residues 193 to 277 (SGSLEDDWDF…NPEYKGEWKP (85 aa)) form a disordered region. Residues 198 to 308 (DDWDFLPPKK…YSPDANIYAY (111 aa)) are P-domain. Basic and acidic residues predominate over residues 207–251 (KIKDPDASKPEDWDERAKIDDPTDSKPEDWDKPEHIPDPDAKKPE). K209 is modified (N6-acetyllysine). 6 consecutive repeat copies span residues 210-221 (DPDASKPEDWDE), 227-238 (DPTDSKPEDWDK), 244-255 (DPDAKKPEDWDE), 259-269 (GEWEPPVIQNP), 273-283 (GEWKPRQIDNP), and 287-297 (GTWIHPEIDNP). The tract at residues 237–270 (DKPEHIPDPDAKKPEDWDEEMDGEWEPPVIQNPE) is interaction with PPIB. Positions 252-261 (DWDEEMDGEW) are enriched in acidic residues. The 3 X approximate repeats stretch occupies residues 259–297 (GEWEPPVIQNPEYKGEWKPRQIDNPDYKGTWIHPEIDNP). Residues 309 to 418 (DSFAVLGLDL…AAAGQAKDEL (110 aa)) are C-domain. D317 is a binding site for an alpha-D-glucoside. Ca(2+) is bound at residue D328. The tract at residues 349-418 (VTKTAEKQMK…AAAGQAKDEL (70 aa)) is disordered. The span at 352–379 (TAEKQMKDKQDEEQRLKEEEEEKKRKEE) shows a compositional bias: basic and acidic residues. Residues 380–409 (EEAEEDEEDKDDKEDEDEDEEDKDEEEEEA) show a composition bias toward acidic residues. The short motif at 415 to 418 (KDEL) is the Prevents secretion from ER element.

This sequence belongs to the calreticulin family. In terms of assembly, monomer. Component of an EIF2 complex at least composed of CELF1/CUGBP1, CALR, CALR3, EIF2S1, EIF2S2, HSP90B1 and HSPA5. Interacts with PDIA3/ERp57 and SPACA9. Interacts with TRIM21. Interacts with NR3C1. Interacts with PPIB. Interacts (via P-domain) with PDIA5. Interacts with CLCC1.

The protein resides in the endoplasmic reticulum lumen. Its subcellular location is the cytoplasm. The protein localises to the cytosol. It localises to the secreted. It is found in the extracellular space. The protein resides in the extracellular matrix. Its subcellular location is the cell surface. The protein localises to the sarcoplasmic reticulum lumen. It localises to the cytoplasmic vesicle. It is found in the secretory vesicle. The protein resides in the cortical granule. Its subcellular location is the cytolytic granule. Its function is as follows. Calcium-binding chaperone that promotes folding, oligomeric assembly and quality control in the endoplasmic reticulum (ER) via the calreticulin/calnexin cycle. This lectin interacts transiently with almost all of the monoglucosylated glycoproteins that are synthesized in the ER. Interacts with the DNA-binding domain of NR3C1 and mediates its nuclear export. Involved in maternal gene expression regulation. May participate in oocyte maturation via the regulation of calcium homeostasis. Present in the cortical granules of non-activated oocytes, is exocytosed during the cortical reaction in response to oocyte activation and might participate in the block to polyspermy. This Oryctolagus cuniculus (Rabbit) protein is Calreticulin (CALR).